The chain runs to 173 residues: Photosystem I assembly protein Ycf3 (173 aa).

TPR repeat units lie at residues 35–68 (AFAY…EDDP), 72–105 (SYIL…NPRM), and 120–153 (GEKA…APNN).

It belongs to the Ycf3 family.

It is found in the cellular thylakoid membrane. In terms of biological role, essential for the assembly of the photosystem I (PSI) complex. May act as a chaperone-like factor to guide the assembly of the PSI subunits. In Picosynechococcus sp. (strain ATCC 27264 / PCC 7002 / PR-6) (Agmenellum quadruplicatum), this protein is Photosystem I assembly protein Ycf3.